The chain runs to 196 residues: Carnitine operon protein CaiE (196 aa).

Residues 173–196 (TQPLRQMEENRPRLQGTTDVTPKR) form a disordered region. Over residues 187–196 (QGTTDVTPKR) the composition is skewed to polar residues.

Belongs to the transferase hexapeptide repeat family.

It participates in amine and polyamine metabolism; carnitine metabolism. Functionally, overproduction of CaiE stimulates the activity of CaiB and CaiD. The sequence is that of Carnitine operon protein CaiE from Escherichia coli O6:K15:H31 (strain 536 / UPEC).